A 46-amino-acid polypeptide reads, in one-letter code: Photosystem II reaction center protein K (46 aa).

Positions 1–9 (MIDALVLVA) are excised as a propeptide. Residues 10-19 (KLPEAYAIFD) are Lumenal-facing. Residues 20–39 (PLVDVLPVIPVLFLALAFVW) traverse the membrane as a helical segment. The Cytoplasmic portion of the chain corresponds to 40–46 (QAAVGFR).

The protein belongs to the PsbK family. As to quaternary structure, PSII is composed of 1 copy each of membrane proteins PsbA, PsbB, PsbC, PsbD, PsbE, PsbF, PsbH, PsbI, PsbJ, PsbK, PsbL, PsbM, PsbT, PsbX, PsbY, PsbZ, Psb30/Ycf12, peripheral proteins PsbO, CyanoQ(PsbQ), PsbU, PsbV and a large number of cofactors. It forms dimeric complexes. Part of a photosystem II (PSII) assembly intermediate complex PSII-I; crystallized from a strain deleted of psbJ, it forms monomeric PSII before addition of the oxygen evolving complex. PSII-I includes 3 assembly factors not found in mature PSII (Psb27, Psb28 and Psb34). Requires PSII binds multiple chlorophylls, carotenoids and specific lipids. as cofactor.

The protein localises to the cellular thylakoid membrane. One of the components of the core complex of photosystem II (PSII). PSII is a light-driven water:plastoquinone oxidoreductase that uses light energy to abstract electrons from H(2)O, generating O(2) and a proton gradient subsequently used for ATP formation. It consists of a core antenna complex that captures photons, and an electron transfer chain that converts photonic excitation into a charge separation. Required for association of PsbZ and Psb30/Ycf12 with PSII. The protein is Photosystem II reaction center protein K of Thermosynechococcus vestitus (strain NIES-2133 / IAM M-273 / BP-1).